The chain runs to 330 residues: uncharacterized protein (330 aa).

2 disordered regions span residues 136–160 (VPPSVNEPKPKTSQTTKPPSNDESS) and 172–314 (DNEK…SQFN). Pro residues predominate over residues 223 to 235 (PKPPAPPPPPPVP). Residues 236 to 246 (ISMTPAAISVT) are compositionally biased toward low complexity. Composition is skewed to polar residues over residues 263–276 (AQSTLPSVSSTTDE), 284–294 (TRSSSQSNSTV), and 304–314 (PASSPTFSQFN).

This is an uncharacterized protein from Danio rerio (Zebrafish).